A 509-amino-acid chain; its full sequence is Solute carrier family 2, facilitated glucose transporter member 4 (509 aa).

Residues 1–24 (MPSGFQQIGSEDGEPPQQRVTGTL) are Cytoplasmic-facing. Residues 7–13 (QIGSEDG) are interaction with SRFBP1. S10 is subject to Phosphoserine. Residues 25 to 45 (VLAVFSAVLGSLQFGYNIGVI) traverse the membrane as a helical segment. Over 46 to 81 (NAPQKVIEQSYNETWLGRQGPEGPSSIPPGTLTTLW) the chain is Extracellular. N-linked (GlcNAc...) asparagine glycosylation occurs at N57. A helical transmembrane segment spans residues 82–102 (ALSVAIFSVGGMISSFLIGII). The Cytoplasmic segment spans residues 103–111 (SQWLGRKRA). A helical transmembrane segment spans residues 112–132 (MLVNNVLAVLGGSLMGLANAA). Topologically, residues 133 to 142 (ASYEMLILGR) are extracellular. Residues 143 to 163 (FLIGAYSGLTSGLVPMYVGEI) traverse the membrane as a helical segment. Residues 164-171 (APTHLRGA) lie on the Cytoplasmic side of the membrane. A helical membrane pass occupies residues 172 to 192 (LGTLNQLAIVIGILIAQVLGL). A D-glucose-binding site is contributed by Q177. The Extracellular portion of the chain corresponds to 193-201 (ESLLGTASL). The helical transmembrane segment at 202–222 (WPLLLGLTVLPALLQLVLLPF) threads the bilayer. A lipid anchor (S-palmitoyl cysteine) is attached at C223. Residues 223–287 (CPESPRYLYI…LLGSRTHRQP (65 aa)) lie on the Cytoplasmic side of the membrane. S274 carries the phosphoserine; by SGK1 modification. Residues 288–308 (LIIAVVLQLSQQLSGINAVFY) form a helical membrane-spanning segment. D-glucose is bound by residues 298 to 299 (QQ) and N304. Over 309–323 (YSTSIFETAGVGQPA) the chain is Extracellular. Residues 324-344 (YATIGAGVVNTVFTLVSVLLV) traverse the membrane as a helical segment. A D-glucose-binding site is contributed by N333. The Cytoplasmic segment spans residues 345 to 353 (ERAGRRTLH). Residues 354 to 374 (LLGLAGMCGCAILMTVALLLL) traverse the membrane as a helical segment. Topologically, residues 375–384 (ERVPAMSYVS) are extracellular. The chain crosses the membrane as a helical span at residues 385–405 (IVAIFGFVAFFEIGPGPIPWF). D-glucose contacts are provided by E396 and W404. The Cytoplasmic segment spans residues 406-417 (IVAELFSQGPRP). A helical transmembrane segment spans residues 418–438 (AAMAVAGFSNWTSNFIIGMGF). Topologically, residues 439–445 (QYVAEAM) are extracellular. Residues 446–466 (GPYVFLLFAVLLLGFFIFTFL) form a helical membrane-spanning segment. Topologically, residues 467 to 509 (RVPETRGRTFDQISAAFHRTPSLLEQEVKPSTELEYLGPDEND) are cytoplasmic. T486 carries the post-translational modification Phosphothreonine. S488 is modified (phosphoserine). The short motif at 489 to 490 (LL) is the Dileucine internalization motif element.

This sequence belongs to the major facilitator superfamily. Sugar transporter (TC 2.A.1.1) family. Glucose transporter subfamily. As to quaternary structure, interacts with NDUFA9. Binds to DAXX. Interacts via its N-terminus with SRFBP1. Interacts with TRARG1; the interaction is required for proper SLC2A4 recycling after insulin stimulation. Sumoylated. Post-translationally, palmitoylated. Palmitoylation by ZDHHC7 controls the insulin-dependent translocation of GLUT4 to the plasma membrane. In terms of tissue distribution, skeletal and cardiac muscles; brown and white fat.

The protein localises to the cell membrane. The protein resides in the endomembrane system. It is found in the cytoplasm. It localises to the perinuclear region. The enzyme catalyses D-glucose(out) = D-glucose(in). In terms of biological role, insulin-regulated facilitative glucose transporter, which plays a key role in removal of glucose from circulation. Response to insulin is regulated by its intracellular localization: in the absence of insulin, it is efficiently retained intracellularly within storage compartments in muscle and fat cells. Upon insulin stimulation, translocates from these compartments to the cell surface where it transports glucose from the extracellular milieu into the cell. The polypeptide is Solute carrier family 2, facilitated glucose transporter member 4 (Homo sapiens (Human)).